A 160-amino-acid chain; its full sequence is 3-hydroxyacyl-[acyl-carrier-protein] dehydratase FabZ (160 aa).

The active site involves His59.

This sequence belongs to the thioester dehydratase family. FabZ subfamily.

Its subcellular location is the cytoplasm. It carries out the reaction a (3R)-hydroxyacyl-[ACP] = a (2E)-enoyl-[ACP] + H2O. Functionally, involved in unsaturated fatty acids biosynthesis. Catalyzes the dehydration of short chain beta-hydroxyacyl-ACPs and long chain saturated and unsaturated beta-hydroxyacyl-ACPs. This Burkholderia thailandensis (strain ATCC 700388 / DSM 13276 / CCUG 48851 / CIP 106301 / E264) protein is 3-hydroxyacyl-[acyl-carrier-protein] dehydratase FabZ.